The primary structure comprises 242 residues: UPF0273 protein MJ1359 (242 aa).

Residues 2–242 form the KaiC domain; it reads KRVKTGIPGM…VYPDKVLKLR (241 aa). Residue 29 to 36 coordinates ATP; the sequence is GGPGTGKS.

It belongs to the UPF0273 family.

This is UPF0273 protein MJ1359 from Methanocaldococcus jannaschii (strain ATCC 43067 / DSM 2661 / JAL-1 / JCM 10045 / NBRC 100440) (Methanococcus jannaschii).